The following is a 229-amino-acid chain: Potassium/proton antiporter CemA (229 aa).

4 helical membrane-spanning segments follow: residues 7-27 (LASL…SLSF), 106-126 (IILH…YFFL), 154-174 (ILLV…ELMI), and 189-209 (IISG…KYWI).

It belongs to the CemA family.

The protein resides in the plastid. It is found in the chloroplast inner membrane. It catalyses the reaction K(+)(in) + H(+)(out) = K(+)(out) + H(+)(in). Contributes to K(+)/H(+) antiport activity by supporting proton efflux to control proton extrusion and homeostasis in chloroplasts in a light-dependent manner to modulate photosynthesis. Prevents excessive induction of non-photochemical quenching (NPQ) under continuous-light conditions. Indirectly promotes efficient inorganic carbon uptake into chloroplasts. In Phalaenopsis aphrodite subsp. formosana (Moth orchid), this protein is Potassium/proton antiporter CemA.